Here is a 247-residue protein sequence, read N- to C-terminus: Chaperone protein NfaE (247 aa).

The signal sequence occupies residues 1 to 29; the sequence is MKMRAVAVFTGMLTGVLSVTGLLSAGAYA. Residues 106–125 are disordered; that stretch reads GQQSSRRRSVSTGGEFPSDR.

It belongs to the periplasmic pilus chaperone family.

Its subcellular location is the periplasm. Functionally, involved in the biogenesis of the NFA-I adhesin. The sequence is that of Chaperone protein NfaE (nfaE) from Escherichia coli.